The chain runs to 329 residues: GTP 3',8-cyclase (329 aa).

The 227-residue stretch at 8–234 folds into the Radical SAM core domain; sequence AFARKFYYLR…QLRQRSDGPA (227 aa). Arg-17 is a binding site for GTP. [4Fe-4S] cluster contacts are provided by Cys-24 and Cys-28. Position 30 (Tyr-30) interacts with S-adenosyl-L-methionine. Position 31 (Cys-31) interacts with [4Fe-4S] cluster. Arg-68 is a GTP binding site. Gly-72 serves as a coordination point for S-adenosyl-L-methionine. Thr-99 is a GTP binding site. Ser-123 contacts S-adenosyl-L-methionine. Lys-160 provides a ligand contact to GTP. Met-194 contributes to the S-adenosyl-L-methionine binding site. [4Fe-4S] cluster is bound by residues Cys-257 and Cys-260. A GTP-binding site is contributed by 262–264; the sequence is RLR. Cys-274 provides a ligand contact to [4Fe-4S] cluster.

Belongs to the radical SAM superfamily. MoaA family. In terms of assembly, monomer and homodimer. It depends on [4Fe-4S] cluster as a cofactor.

It carries out the reaction GTP + AH2 + S-adenosyl-L-methionine = (8S)-3',8-cyclo-7,8-dihydroguanosine 5'-triphosphate + 5'-deoxyadenosine + L-methionine + A + H(+). It participates in cofactor biosynthesis; molybdopterin biosynthesis. Its function is as follows. Catalyzes the cyclization of GTP to (8S)-3',8-cyclo-7,8-dihydroguanosine 5'-triphosphate. The chain is GTP 3',8-cyclase from Salmonella heidelberg (strain SL476).